We begin with the raw amino-acid sequence, 304 residues long: Heme A synthase (304 aa).

Residues 1 to 8 lie on the Cytoplasmic side of the membrane; sequence MFNKRNLK. The helical transmembrane segment at 9-29 threads the bilayer; it reads WLSVLATIIMAFVQLGGALVT. Residues 30–67 are Extracellular-facing; it reads KTGSEDGCGSSWPLCHGALLPQNLPIDTIIELSHRAVS. Cysteine 37 and cysteine 44 are oxidised to a cystine. Glutamate 60 is an active-site residue. Histidine 63 provides a ligand contact to heme o. Residues 68 to 88 form a helical membrane-spanning segment; it reads GLSLIVVLWLAITAWKHIGYI. The Cytoplasmic portion of the chain corresponds to 89 to 93; that stretch reads REVKP. Residues 94–114 traverse the membrane as a helical segment; the sequence is LAIISIAFLLVQALIGAAAVI. At 115–123 the chain is on the extracellular side; sequence WQQNSYVLA. A helical transmembrane segment spans residues 124–144; the sequence is LHFGISLISFSSVFVLMLIIF. Histidine 125 lines the heme o pocket. Topologically, residues 145 to 163 are cytoplasmic; it reads EVDKKYEADELYIRKPLRR. The chain crosses the membrane as a helical span at residues 164-184; the sequence is LTWIMTGIVYLTIYTGALVRH. Topologically, residues 185-215 are extracellular; it reads AKASLAYGGWPLPFHDIIPHTEQDWVQFAHR. Histidine 214 contacts heme b. Residues 216–236 form a helical membrane-spanning segment; the sequence is GMAFITFFWIMITFIHAVKNY. Residues 237-244 are Cytoplasmic-facing; the sequence is SENRTIRY. The chain crosses the membrane as a helical span at residues 245 to 265; it reads GYTTAFILIILQVITGALSVM. Residues 266-270 are Extracellular-facing; the sequence is TNVNL. The helical transmembrane segment at 271 to 291 threads the bilayer; the sequence is FIALLHALFITILFGMIAYFI. Histidine 276 is a binding site for heme b. The Cytoplasmic portion of the chain corresponds to 292–304; it reads MLMLRTIRSEKIK.

Belongs to the COX15/CtaA family. Type 1 subfamily. In terms of assembly, interacts with CtaB. Heme b is required as a cofactor.

It is found in the cell membrane. It carries out the reaction Fe(II)-heme o + 2 A + H2O = Fe(II)-heme a + 2 AH2. Its pathway is porphyrin-containing compound metabolism; heme A biosynthesis; heme A from heme O: step 1/1. Catalyzes the conversion of heme O to heme A by two successive hydroxylations of the methyl group at C8. The first hydroxylation forms heme I, the second hydroxylation results in an unstable dihydroxymethyl group, which spontaneously dehydrates, resulting in the formyl group of heme A. The chain is Heme A synthase from Staphylococcus haemolyticus (strain JCSC1435).